The chain runs to 436 residues: GTPase Der (436 aa).

EngA-type G domains are found at residues 4–167 (PVVA…PKVE) and 176–351 (IRFC…ESHN). GTP contacts are provided by residues 10–17 (GRPNVGKS), 57–61 (DTGGI), 119–122 (NKVD), 182–189 (GRPNVGKS), 229–233 (DTAGM), and 294–297 (NKWD). In terms of domain architecture, KH-like spans 352 to 436 (IRVQTNVLND…PIRIIARARD (85 aa)).

Belongs to the TRAFAC class TrmE-Era-EngA-EngB-Septin-like GTPase superfamily. EngA (Der) GTPase family. Associates with the 50S ribosomal subunit.

Functionally, GTPase that plays an essential role in the late steps of ribosome biogenesis. This Bacillus cytotoxicus (strain DSM 22905 / CIP 110041 / 391-98 / NVH 391-98) protein is GTPase Der.